The sequence spans 5541 residues: Malpibaldin synthetase (5541 aa).

The segment covering 1-13 (MGDKRPDGIKSAE) has biased composition (basic and acidic residues). The tract at residues 1-26 (MGDKRPDGIKSAESHGQPSAPFGAEN) is disordered. The condensation 1 stretch occupies residues 137-378 (KEDDIARDES…IDIISPAEKT (242 aa)). The tract at residues 401 to 799 (FEEQVDKSPD…GRNDDQVKIR (399 aa)) is adenylation 1. Residues 901 to 975 (VPCGETEDAI…VLAQDLSKHQ (75 aa)) enclose the Carrier 1 domain. S936 carries the O-(pantetheine 4'-phosphoryl)serine modification. The dual epimerase/condensation (E/C) domain 1 stretch occupies residues 1021-1469 (QDVYSLAPLQ…LPLDERTKLL (449 aa)). The adenylation 2 stretch occupies residues 1489 to 1899 (FEQQVKQSPI…GRNDDQIKIR (411 aa)). One can recognise a Carrier 2 domain in the interval 2001 to 2075 (SPQGRIECAL…SFAQAFKGQL (75 aa)). O-(pantetheine 4'-phosphoryl)serine is present on S2036. Residues 2095–2537 (ELSFSQQRLW…LGSTEEELLL (443 aa)) are condensation 2. Residues 2557–2956 (FEDQVERSPD…GRNDDQVKIR (400 aa)) form an adenylation 3 region. A Carrier 3 domain is found at 3058–3132 (EPQGEVEMKL…VLAASITRGC (75 aa)). S3093 carries the post-translational modification O-(pantetheine 4'-phosphoryl)serine. The interval 3182–3616 (QDIYSLSPLQ…VIPAEEHDLL (435 aa)) is dual epimerase/condensation (E/C) domain 2. An adenylation 4 region spans residues 3637–4038 (FENQVRERPE…GRNDEQVKIR (402 aa)). The 75-residue stretch at 4140–4214 (APRGDIEISL…VLAASLNTHQ (75 aa)) folds into the Carrier 4 domain. S4175 is subject to O-(pantetheine 4'-phosphoryl)serine. Residues 4260–4695 (VQDVYSLSPL…VIPAEEHDLL (436 aa)) are dual epimerase/condensation (E/C) domain 3. The interval 4716-5117 (FENQVRERPE…GRNDEQVKIR (402 aa)) is adenylation 5. The 76-residue stretch at 5219 to 5294 (LPSGDVEIGL…ELAQKLVQGG (76 aa)) folds into the Carrier 5 domain. Position 5254 is an O-(pantetheine 4'-phosphoryl)serine (S5254). Residues 5315–5523 (PLFCIHSGLG…VECTHIEMDK (209 aa)) are thioesterase (TE) domain.

This sequence belongs to the NRP synthetase family.

In terms of biological role, nonribosomal peptide synthetase that catalyzes the biosynthesis of the hydrophobic cyclopentapeptides malpibaldins, natural products that show biosurfactant activities. Module 3 shows promiscuous adenylation (accepting either Trp, Phe or Tyr) leading to the parallel production of multiple products from one NRPS assembly line, including malpibaldin A corresponding to cyclo(-L-Leu-D-Leu-D-Phe-L-Leu-D-Val-), malpibaldin B corresponding to cyclo(-L-Leu-D-Leu-D-Tyr-L-Leu-D-Val-) and malpibaldin C corresponding to cyclo(-Leu-Leu-Trp-Leu-Val-). The chain is Malpibaldin synthetase from Mortierella alpina (Oleaginous fungus).